Reading from the N-terminus, the 145-residue chain is Large ribosomal subunit protein uL16 (145 aa).

The protein belongs to the universal ribosomal protein uL16 family. As to quaternary structure, part of the 50S ribosomal subunit.

In terms of biological role, binds 23S rRNA and is also seen to make contacts with the A and possibly P site tRNAs. The protein is Large ribosomal subunit protein uL16 of Lachnospira eligens (strain ATCC 27750 / DSM 3376 / VPI C15-48 / C15-B4) (Eubacterium eligens).